Consider the following 470-residue polypeptide: Membrane-bound lytic murein transglycosylase F (470 aa).

A signal peptide spans 1–21; that stretch reads MLKEKLIIIITLVMLLCACDI. Residues 22–259 form a non-LT domain region; that stretch reads QEQSTQLAQI…VLEEKYFGHV (238 aa). Positions 260–470 are LT domain; sequence RQFNYVNTLA…PKIGDEVEAK (211 aa). E304 is a catalytic residue.

The protein in the N-terminal section; belongs to the bacterial solute-binding protein 3 family. In the C-terminal section; belongs to the transglycosylase Slt family.

The protein resides in the cell outer membrane. The catalysed reaction is Exolytic cleavage of the (1-&gt;4)-beta-glycosidic linkage between N-acetylmuramic acid (MurNAc) and N-acetylglucosamine (GlcNAc) residues in peptidoglycan, from either the reducing or the non-reducing ends of the peptidoglycan chains, with concomitant formation of a 1,6-anhydrobond in the MurNAc residue.. In terms of biological role, murein-degrading enzyme that degrades murein glycan strands and insoluble, high-molecular weight murein sacculi, with the concomitant formation of a 1,6-anhydromuramoyl product. Lytic transglycosylases (LTs) play an integral role in the metabolism of the peptidoglycan (PG) sacculus. Their lytic action creates space within the PG sacculus to allow for its expansion as well as for the insertion of various structures such as secretion systems and flagella. The protein is Membrane-bound lytic murein transglycosylase F of Pseudoalteromonas translucida (strain TAC 125).